The following is a 466-amino-acid chain: Membrane-bound lytic murein transglycosylase F (466 aa).

A signal peptide spans 1-24 (MKRFKLNYFIIGLIAILLTWSLWT). Positions 25–268 (TVPWRNAHQD…RLEEKYLGHV (244 aa)) are non-LT domain. Positions 269–466 (GGFDYVDTKT…KEKKAAQLAD (198 aa)) are LT domain. The active site involves Glu-313.

In the N-terminal section; belongs to the bacterial solute-binding protein 3 family. It in the C-terminal section; belongs to the transglycosylase Slt family.

The protein localises to the cell outer membrane. It carries out the reaction Exolytic cleavage of the (1-&gt;4)-beta-glycosidic linkage between N-acetylmuramic acid (MurNAc) and N-acetylglucosamine (GlcNAc) residues in peptidoglycan, from either the reducing or the non-reducing ends of the peptidoglycan chains, with concomitant formation of a 1,6-anhydrobond in the MurNAc residue.. Murein-degrading enzyme that degrades murein glycan strands and insoluble, high-molecular weight murein sacculi, with the concomitant formation of a 1,6-anhydromuramoyl product. Lytic transglycosylases (LTs) play an integral role in the metabolism of the peptidoglycan (PG) sacculus. Their lytic action creates space within the PG sacculus to allow for its expansion as well as for the insertion of various structures such as secretion systems and flagella. In Sodalis glossinidius (strain morsitans), this protein is Membrane-bound lytic murein transglycosylase F.